Reading from the N-terminus, the 138-residue chain is ATP synthase epsilon chain (138 aa).

Positions 88 to 119 are disordered; it reads DREEARSTLSAAQARLDQSEQSEDKQERYEAQ. The span at 109–119 shows a compositional bias: basic and acidic residues; that stretch reads SEDKQERYEAQ.

It belongs to the ATPase epsilon chain family. F-type ATPases have 2 components, CF(1) - the catalytic core - and CF(0) - the membrane proton channel. CF(1) has five subunits: alpha(3), beta(3), gamma(1), delta(1), epsilon(1). CF(0) has three main subunits: a, b and c.

Its subcellular location is the cellular thylakoid membrane. In terms of biological role, produces ATP from ADP in the presence of a proton gradient across the membrane. This is ATP synthase epsilon chain from Acaryochloris marina (strain MBIC 11017).